The following is a 347-amino-acid chain: 4-hydroxy-2-oxovalerate aldolase 1 (347 aa).

The 253-residue stretch at 13 to 265 (IRVTDTSLRD…KTGIDFFAIA (253 aa)) folds into the Pyruvate carboxyltransferase domain. 21–22 (RD) contributes to the substrate binding site. Aspartate 22 serves as a coordination point for Mn(2+). The Proton acceptor role is filled by histidine 25. Positions 175 and 204 each coordinate substrate. Mn(2+) is bound by residues histidine 204 and histidine 206. Tyrosine 295 lines the substrate pocket.

This sequence belongs to the 4-hydroxy-2-oxovalerate aldolase family.

It carries out the reaction (S)-4-hydroxy-2-oxopentanoate = acetaldehyde + pyruvate. This is 4-hydroxy-2-oxovalerate aldolase 1 from Rhodococcus erythropolis (strain PR4 / NBRC 100887).